A 181-amino-acid polypeptide reads, in one-letter code: Histone deacetylase complex subunit SAP30L-A (181 aa).

Cystine bridges form between Cys26/Cys27 and Cys35/Cys71. The Atypical zinc finger occupies 26 to 74; it reads CCLIDGGERCPRPAGNASFSKRVQKSISQKKLKLDIDKNVRHLYICDFH. Residues 82–103 are disordered; it reads RNKRKRKTSDDGGDSPEHETDI. The short motif at 83-88 is the Nuclear localization signal (NLS) element; sequence NKRKRK. Residues 85–87 form an important for DNA and phosphoinositide binding region; sequence RKR.

This sequence belongs to the SAP30 family. As to quaternary structure, interacts with components of the histone deacetylase complex sin3a, hdac1 and hdac2. Binds histones and nucleosomes.

The protein localises to the nucleus. Its subcellular location is the nucleolus. In terms of biological role, functions as a transcription repressor, probably via its interaction with histone deacetylase complexes. Involved in the functional recruitment of the class 1 Sin3-histone deacetylase complex (HDAC) to the nucleolus. Binds DNA, apparently without sequence-specificity, and bends bound double-stranded DNA. Binds phosphoinositol phosphates (phosphoinositol 3-phosphate, phosphoinositol 4-phosphate and phosphoinositol 5-phosphate) via the same basic sequence motif that mediates DNA binding and nuclear import. This is Histone deacetylase complex subunit SAP30L-A (sap30l-a) from Xenopus laevis (African clawed frog).